Reading from the N-terminus, the 726-residue chain is Type VI secretion system spike protein VgrG1c (726 aa).

Residues 502–522 (ANATQSGTKSRSSKGGTPANF) form a disordered region. The span at 507 to 518 (SGTKSRSSKGGT) shows a compositional bias: low complexity.

The protein belongs to the VgrG protein family. As to quaternary structure, forms homomultimers. Part of the type VI secretion system (T6SS).

The protein resides in the secreted. In terms of biological role, part of the H1 type VI secretion system (H1-T6SS) specialized secretion system, which delivers several virulence factors in both prokaryotic and eukaryotic cells during infection. Allows the delivery of the Tse5/RhsP1 toxin to target cells where it exerts its toxicity. This is Type VI secretion system spike protein VgrG1c from Pseudomonas aeruginosa (strain ATCC 15692 / DSM 22644 / CIP 104116 / JCM 14847 / LMG 12228 / 1C / PRS 101 / PAO1).